The chain runs to 427 residues: Light-independent protochlorophyllide reductase subunit N (427 aa).

Residues Cys-32, Cys-57, and Cys-118 each contribute to the [4Fe-4S] cluster site.

Belongs to the BchN/ChlN family. In terms of assembly, protochlorophyllide reductase is composed of three subunits; BchL, BchN and BchB. Forms a heterotetramer of two BchB and two BchN subunits. [4Fe-4S] cluster is required as a cofactor.

It carries out the reaction chlorophyllide a + oxidized 2[4Fe-4S]-[ferredoxin] + 2 ADP + 2 phosphate = protochlorophyllide a + reduced 2[4Fe-4S]-[ferredoxin] + 2 ATP + 2 H2O. It functions in the pathway porphyrin-containing compound metabolism; bacteriochlorophyll biosynthesis (light-independent). Its function is as follows. Component of the dark-operative protochlorophyllide reductase (DPOR) that uses Mg-ATP and reduced ferredoxin to reduce ring D of protochlorophyllide (Pchlide) to form chlorophyllide a (Chlide). This reaction is light-independent. The NB-protein (BchN-BchB) is the catalytic component of the complex. The polypeptide is Light-independent protochlorophyllide reductase subunit N (Rubrivivax gelatinosus (strain NBRC 100245 / IL144)).